We begin with the raw amino-acid sequence, 223 residues long: MQKQRFCLDTTAITDSDVRKSLGVSNISESAEKIMDIIAQARVQLDISCHIPYNTVYKELIGFLVREECAPETLIKVNTWLVKKTPNRYEIKIPAEIFYEYIKDLRERINKGMRISENAMYETALEAYILSKPDEKDREDVLNEVLSKTVNSFRDKYRNTLRGGTLDSAPDLDVLLLAKELDAAVVANDEGIEKWAQRLGLRFVNARDFPFIIQEYLDLWDKK.

This sequence belongs to the HARP family.

It carries out the reaction Endonucleolytic cleavage of RNA, removing 5'-extranucleotides from tRNA precursor.. In terms of biological role, RNA-free RNase P that catalyzes the removal of the 5'-leader sequence from pre-tRNA to produce the mature 5'-terminus. This Methanococcus maripaludis (strain C5 / ATCC BAA-1333) protein is RNA-free ribonuclease P.